Here is a 312-residue protein sequence, read N- to C-terminus: Beta-ketoacyl-[acyl-carrier-protein] synthase III (312 aa).

Catalysis depends on residues Cys-112 and His-237. The tract at residues 238-242 (QANIR) is ACP-binding. Asn-267 is a catalytic residue.

Belongs to the thiolase-like superfamily. FabH family. As to quaternary structure, homodimer.

The protein resides in the cytoplasm. It catalyses the reaction malonyl-[ACP] + acetyl-CoA + H(+) = 3-oxobutanoyl-[ACP] + CO2 + CoA. It participates in lipid metabolism; fatty acid biosynthesis. Catalyzes the condensation reaction of fatty acid synthesis by the addition to an acyl acceptor of two carbons from malonyl-ACP. Catalyzes the first condensation reaction which initiates fatty acid synthesis and may therefore play a role in governing the total rate of fatty acid production. Possesses both acetoacetyl-ACP synthase and acetyl transacylase activities. Its substrate specificity determines the biosynthesis of branched-chain and/or straight-chain of fatty acids. The polypeptide is Beta-ketoacyl-[acyl-carrier-protein] synthase III (Listeria innocua serovar 6a (strain ATCC BAA-680 / CLIP 11262)).